Consider the following 770-residue polypeptide: DEAD-box ATP-dependent RNA helicase 24 (770 aa).

Positions Met1–Val106 are disordered. Polar residues predominate over residues Arg14 to Pro26. Over residues Asp34 to Phe43 the composition is skewed to acidic residues. Residues Ser44–Pro55 show a composition bias toward low complexity. The Q motif motif lies at Lys219–Cys247. Residues Leu250–Val425 form the Helicase ATP-binding domain. Ala263 to Thr270 provides a ligand contact to ATP. The DEAD box signature appears at Asp373 to Asp376. Positions Asp436–Ala599 constitute a Helicase C-terminal domain. Over residues Arg604–Lys613 the composition is skewed to basic and acidic residues. 3 disordered regions span residues Arg604–Gly640, Val683–Phe704, and Leu729–Arg770. Residues Gly621–Arg635 are compositionally biased toward gly residues. Low complexity predominate over residues Val683–Ser697. The span at Thr744 to Glu753 shows a compositional bias: polar residues. Basic and acidic residues predominate over residues Ser754 to Arg770.

It belongs to the DEAD box helicase family.

The catalysed reaction is ATP + H2O = ADP + phosphate + H(+). This chain is DEAD-box ATP-dependent RNA helicase 24, found in Oryza sativa subsp. japonica (Rice).